The sequence spans 508 residues: Lysine--tRNA ligase (508 aa).

2 residues coordinate Mg(2+): Glu418 and Glu425.

It belongs to the class-II aminoacyl-tRNA synthetase family. Homodimer. Requires Mg(2+) as cofactor.

Its subcellular location is the cytoplasm. The enzyme catalyses tRNA(Lys) + L-lysine + ATP = L-lysyl-tRNA(Lys) + AMP + diphosphate. This chain is Lysine--tRNA ligase, found in Burkholderia ambifaria (strain MC40-6).